We begin with the raw amino-acid sequence, 463 residues long: Argininosuccinate lyase (463 aa).

This sequence belongs to the lyase 1 family. Argininosuccinate lyase subfamily.

It is found in the cytoplasm. The catalysed reaction is 2-(N(omega)-L-arginino)succinate = fumarate + L-arginine. It participates in amino-acid biosynthesis; L-arginine biosynthesis; L-arginine from L-ornithine and carbamoyl phosphate: step 3/3. The sequence is that of Argininosuccinate lyase from Prochlorococcus marinus (strain NATL1A).